The following is a 241-amino-acid chain: Dolichol-phosphate mannosyltransferase subunit 1 (241 aa).

Residues P13, Y15, E17, I44, D46, D99, A100, D101, R128, R215, and K221 each contribute to the GDP-alpha-D-mannose site. D101 serves as a coordination point for Mg(2+). D101 is a Mn(2+) binding site.

This sequence belongs to the glycosyltransferase 2 family. It depends on Mg(2+) as a cofactor. Mn(2+) serves as cofactor. Ca(2+) is required as a cofactor.

The protein localises to the endoplasmic reticulum. It catalyses the reaction a di-trans,poly-cis-dolichyl phosphate + GDP-alpha-D-mannose = a di-trans,poly-cis-dolichyl beta-D-mannosyl phosphate + GDP. It functions in the pathway protein modification; protein glycosylation. Functionally, transfers mannose from GDP-mannose to dolichol monophosphate to form dolichol phosphate mannose (Dol-P-Man) which is the mannosyl donor in pathways leading to N-glycosylation, glycosyl phosphatidylinositol membrane anchoring, and O-mannosylation of proteins. The protein is Dolichol-phosphate mannosyltransferase subunit 1 of Drosophila melanogaster (Fruit fly).